The sequence spans 207 residues: Imidazole glycerol phosphate synthase subunit HisH (207 aa).

Residues 1-206 form the Glutamine amidotransferase type-1 domain; it reads MMIVIDYDAG…KEYVYENTAR (206 aa). C79 acts as the Nucleophile in catalysis. Catalysis depends on residues H181 and E183.

In terms of assembly, heterodimer of HisH and HisF.

Its subcellular location is the cytoplasm. The catalysed reaction is 5-[(5-phospho-1-deoxy-D-ribulos-1-ylimino)methylamino]-1-(5-phospho-beta-D-ribosyl)imidazole-4-carboxamide + L-glutamine = D-erythro-1-(imidazol-4-yl)glycerol 3-phosphate + 5-amino-1-(5-phospho-beta-D-ribosyl)imidazole-4-carboxamide + L-glutamate + H(+). It carries out the reaction L-glutamine + H2O = L-glutamate + NH4(+). The protein operates within amino-acid biosynthesis; L-histidine biosynthesis; L-histidine from 5-phospho-alpha-D-ribose 1-diphosphate: step 5/9. Functionally, IGPS catalyzes the conversion of PRFAR and glutamine to IGP, AICAR and glutamate. The HisH subunit catalyzes the hydrolysis of glutamine to glutamate and ammonia as part of the synthesis of IGP and AICAR. The resulting ammonia molecule is channeled to the active site of HisF. The polypeptide is Imidazole glycerol phosphate synthase subunit HisH (Streptococcus sanguinis (strain SK36)).